The sequence spans 136 residues: Protein Tat (136 aa).

The tract at residues 22-37 (CTNCYCKKCCFHCPVC) is cysteine-rich. The segment at 38–48 (FTKKALGISYG) is core. Residues 48-57 (GRKRRGRKSA) are compositionally biased toward basic residues. The interval 48 to 136 (GRKRRGRKSA…SGSSGSACKH (89 aa)) is disordered. Positions 49–55 (RKRRGRK) match the Nuclear localization signal, and RNA-binding (TAR) motif. Polar residues predominate over residues 58–73 (VHSTNNQDPVRQQSLP). Low complexity predominate over residues 104–120 (SSVSSGRTSGTSSSGYT). A compositionally biased stretch (polar residues) spans 123 to 136 (FKTSSGSSGSACKH).

The protein belongs to the lentiviruses Tat family. In terms of assembly, interacts with host CCNT1. Associates with the P-TEFb complex composed at least of Tat, P-TEFb (CDK9 and CCNT1), TAR RNA, RNA Pol II. Interacts with CCNT2; the resulting complex is unable to bind to TAR RNA.

Its subcellular location is the host nucleus. The protein localises to the host nucleolus. Functionally, transcriptional activator that increases RNA Pol II processivity, thereby increasing the level of full-length viral transcripts. Recognizes a hairpin structure at the 5'-LTR of the nascent viral mRNAs referred to as the transactivation responsive RNA element (TAR) and recruits the cyclin T1-CDK9 complex (P-TEFb complex) that will in turn hyperphosphorylate the RNA polymerase II to allow efficient elongation. The CDK9 component of P-TEFb and other Tat-activated kinases hyperphosphorylate the C-terminus of RNA Pol II that becomes stabilized and much more processive. Its function is as follows. Extracellular circulating Tat can be endocytosed by surrounding uninfected cells via the binding to several surface receptors. Endosomal low pH allows Tat to cross the endosome membrane to enter the cytosol and eventually further translocate into the nucleus, thereby inducing severe cell dysfunctions ranging from cell activation to cell death. Through. This is Protein Tat from Simian immunodeficiency virus (isolate TAN1) (SIV-cpz).